The primary structure comprises 226 residues: Fibrillarin-like rRNA/tRNA 2'-O-methyltransferase (226 aa).

S-adenosyl-L-methionine is bound by residues 82–83, 100–101, 125–126, and 145–148; these read TT, EF, DA, and DVAQ.

It belongs to the methyltransferase superfamily. Fibrillarin family. Interacts with nop5. Component of box C/D small ribonucleoprotein (sRNP) particles that contain rpl7ae, FlpA and nop5, plus a guide RNA.

Involved in pre-rRNA and tRNA processing. Utilizes the methyl donor S-adenosyl-L-methionine to catalyze the site-specific 2'-hydroxyl methylation of ribose moieties in rRNA and tRNA. Site specificity is provided by a guide RNA that base pairs with the substrate. Methylation occurs at a characteristic distance from the sequence involved in base pairing with the guide RNA. This Methanosarcina barkeri (strain Fusaro / DSM 804) protein is Fibrillarin-like rRNA/tRNA 2'-O-methyltransferase.